Here is a 679-residue protein sequence, read N- to C-terminus: Glycine--tRNA ligase beta subunit (679 aa).

This sequence belongs to the class-II aminoacyl-tRNA synthetase family. In terms of assembly, tetramer of two alpha and two beta subunits.

The protein resides in the cytoplasm. It carries out the reaction tRNA(Gly) + glycine + ATP = glycyl-tRNA(Gly) + AMP + diphosphate. The protein is Glycine--tRNA ligase beta subunit of Streptococcus pyogenes serotype M6 (strain ATCC BAA-946 / MGAS10394).